We begin with the raw amino-acid sequence, 181 residues long: Der GTPase-activating protein YihI (181 aa).

The segment at 1–73 (MSRIKKARKP…DPRIGSKKPI (73 aa)) is disordered. Residues 22–32 (NRTDRDVESRE) are compositionally biased toward basic and acidic residues. Over residues 33-42 (LKRKRKRKGL) the composition is skewed to basic residues. Positions 55-67 (QARRNAQKKDPRI) are enriched in basic and acidic residues.

It belongs to the YihI family. In terms of assembly, interacts with Der.

Functionally, a GTPase-activating protein (GAP) that modifies Der/EngA GTPase function. May play a role in ribosome biogenesis. The polypeptide is Der GTPase-activating protein YihI (Aliivibrio fischeri (strain MJ11) (Vibrio fischeri)).